We begin with the raw amino-acid sequence, 1031 residues long: LRR receptor-like serine/threonine-protein kinase EFR (1031 aa).

Positions 1–24 (MKLSFSLVFNALTLLLQVCIFAQA) are cleaved as a signal peptide. Over 25 to 653 (RFSNETDMQA…LSVRKKVVSG (629 aa)) the chain is Extracellular. 3 N-linked (GlcNAc...) asparagine glycosylation sites follow: Asn-28, Asn-55, and Asn-95. LRR repeat units follow at residues 98–120 (FLRL…VGRL), 122–144 (RLQY…LSNC), 146–168 (RLST…LGSL), 170–193 (KLAI…GNLT), 194–216 (SLQK…VARL), 218–240 (QMVF…LYNI), 242–264 (SLES…FGYL), 267–289 (NLRR…LANI), 291–312 (SLER…SFGK), and 315–335 (NLWW…SGLE). N-linked (GlcNAc...) asparagine glycosylation is found at Asn-127 and Asn-143. Asn-180 and Asn-191 each carry an N-linked (GlcNAc...) asparagine glycan. Residue Asn-239 is glycosylated (N-linked (GlcNAc...) asparagine). A glycan (N-linked (GlcNAc...) asparagine) is linked at Asn-288. N-linked (GlcNAc...) asparagine glycans are attached at residues Asn-323, Asn-329, Asn-342, and Asn-366. LRR repeat units lie at residues 345–368 (QLEY…ANLS), 370–392 (TLTS…IGNL), 394–416 (SLQE…FGKL), 418–440 (NLQV…FGNM), 442–464 (RLQK…LGRC), 466–487 (YLLD…EILQ), 490–512 (SLAY…VGKL), 514–536 (LLVG…IGGC), 538–560 (SMEF…SRLV), 561–584 (SLKN…ASLP), and 585–597 (SLRN…NKFE). An N-linked (GlcNAc...) asparagine glycan is attached at Asn-439. N-linked (GlcNAc...) asparagine glycosylation occurs at Asn-478. Asn-571, Asn-590, and Asn-608 each carry an N-linked (GlcNAc...) asparagine glycan. A helical transmembrane segment spans residues 654-674 (ICIGIASLLLIIIVASLCWFM). Residues 675–1031 (KRKKKNNASD…WMLNTDMHTM (357 aa)) are Cytoplasmic-facing. Thr-709 bears the Phosphothreonine mark. The Protein kinase domain occupies 712–1001 (FSSTNLIGSG…ELISIRSKFF (290 aa)). Residues 718–726 (IGSGNFGNV) and Lys-741 each bind ATP. 2 positions are modified to phosphotyrosine: Tyr-791 and Tyr-836. Asp-849 acts as the Proton acceptor in catalysis. Tyr-897 is modified (phosphotyrosine). Residues 1005–1020 (TTITESPRDAPQSSPQ) are compositionally biased toward polar residues. A disordered region spans residues 1005-1031 (TTITESPRDAPQSSPQEWMLNTDMHTM).

Belongs to the protein kinase superfamily. Ser/Thr protein kinase family. In terms of assembly, binds to Pseudomonas syringae AvrPto1 and (via the kinase and cytoplasmic domains) to hopD2. Interacts with SERK3/BAK1, SERK4/BKK1, SERK1 and SERK2 in a specific ligand-induced manner. Binds to IOS1. Binds to BIK1 in the absence of pathogen elicitor; dissociates upon pathogen-associated molecular pattern (PAMP)-triggered activation. Post-translationally, autophosphorylated after elicitation with elfl18. Autophosphorylation is inhibited by the binding with avrPto1. Phosphorylation at T-836 is required for immune signaling. Polyubiquitinated at the kinase domain mediated by P.syringae AvrPtoB.

It localises to the cell membrane. It is found in the endomembrane system. The enzyme catalyses L-seryl-[protein] + ATP = O-phospho-L-seryl-[protein] + ADP + H(+). The catalysed reaction is L-threonyl-[protein] + ATP = O-phospho-L-threonyl-[protein] + ADP + H(+). Its function is as follows. Constitutes the pattern-recognition receptor (PPR) that determines the specific perception of elongation factor Tu (EF-Tu), a potent elicitor of the defense response to pathogen-associated molecular patterns (PAMPs); phosphorylates BIK1 upon elicitation to regulate immune responses such as defense hormone expression (e.g. jasmonic acid (JA) and salicylic acid (SA)). Reduces transformation by Rhizobium radiobacter probably by inducing plant defense during the interaction. Binding to the effector AvrPto1 from P.syringae blocks the downstream plant immune response while interaction with hopD2 decreases the phosphorylation level of EFR upon elf18 treatment. Specific endoplasmic reticulum quality control components (ERD2B, CRT3, UGGT and STT3A) are required for the biogenesis of EFR. The sequence is that of LRR receptor-like serine/threonine-protein kinase EFR from Arabidopsis thaliana (Mouse-ear cress).